The sequence spans 381 residues: 1-deoxy-D-xylulose 5-phosphate reductoisomerase (381 aa).

The NADPH site is built by Thr10, Gly11, Ser12, Ile13, Gly36, Lys37, Asn38, and Asn122. Lys123 is a binding site for 1-deoxy-D-xylulose 5-phosphate. Residue Glu124 participates in NADPH binding. Asp148 contributes to the Mn(2+) binding site. Positions 149, 150, 173, and 196 each coordinate 1-deoxy-D-xylulose 5-phosphate. A Mn(2+)-binding site is contributed by Glu150. Gly202 contributes to the NADPH binding site. Residues Ser209, Asn214, Lys215, and Glu218 each contribute to the 1-deoxy-D-xylulose 5-phosphate site. Glu218 contacts Mn(2+).

The protein belongs to the DXR family. Requires Mg(2+) as cofactor. The cofactor is Mn(2+).

The enzyme catalyses 2-C-methyl-D-erythritol 4-phosphate + NADP(+) = 1-deoxy-D-xylulose 5-phosphate + NADPH + H(+). It participates in isoprenoid biosynthesis; isopentenyl diphosphate biosynthesis via DXP pathway; isopentenyl diphosphate from 1-deoxy-D-xylulose 5-phosphate: step 1/6. In terms of biological role, catalyzes the NADPH-dependent rearrangement and reduction of 1-deoxy-D-xylulose-5-phosphate (DXP) to 2-C-methyl-D-erythritol 4-phosphate (MEP). In Desulfitobacterium hafniense (strain Y51), this protein is 1-deoxy-D-xylulose 5-phosphate reductoisomerase.